A 474-amino-acid chain; its full sequence is tRNA-2-methylthio-N(6)-dimethylallyladenosine synthase (474 aa).

One can recognise an MTTase N-terminal domain in the interval 3 to 120; the sequence is KKLHIKTWGC…LPDMIEQVRR (118 aa). [4Fe-4S] cluster-binding residues include Cys-12, Cys-49, Cys-83, Cys-157, Cys-161, and Cys-164. Positions 143–375 constitute a Radical SAM core domain; sequence RAEGPTAFVS…QDRITQQAMR (233 aa). One can recognise a TRAM domain in the interval 378 to 441; sequence RHMMGTVQRI…TNSLRGKFIR (64 aa).

It belongs to the methylthiotransferase family. MiaB subfamily. Monomer. [4Fe-4S] cluster serves as cofactor.

The protein localises to the cytoplasm. It catalyses the reaction N(6)-dimethylallyladenosine(37) in tRNA + (sulfur carrier)-SH + AH2 + 2 S-adenosyl-L-methionine = 2-methylsulfanyl-N(6)-dimethylallyladenosine(37) in tRNA + (sulfur carrier)-H + 5'-deoxyadenosine + L-methionine + A + S-adenosyl-L-homocysteine + 2 H(+). Catalyzes the methylthiolation of N6-(dimethylallyl)adenosine (i(6)A), leading to the formation of 2-methylthio-N6-(dimethylallyl)adenosine (ms(2)i(6)A) at position 37 in tRNAs that read codons beginning with uridine. The protein is tRNA-2-methylthio-N(6)-dimethylallyladenosine synthase of Shewanella sp. (strain MR-7).